A 339-amino-acid chain; its full sequence is Ketol-acid reductoisomerase (NADP(+)) (339 aa).

A KARI N-terminal Rossmann domain is found at 1 to 182; sequence MRVYYDRDAD…GGGRAGIIET (182 aa). NADP(+)-binding positions include 24–27, Arg48, Ser51, Thr53, and 83–86; these read YGSQ and DELQ. His108 is an active-site residue. Gly134 provides a ligand contact to NADP(+). One can recognise a KARI C-terminal knotted domain in the interval 183-328; that stretch reads TFREECETDL…ARLREMMPWI (146 aa). Positions 191, 195, 227, and 231 each coordinate Mg(2+). Ser252 is a substrate binding site.

The protein belongs to the ketol-acid reductoisomerase family. The cofactor is Mg(2+).

The catalysed reaction is (2R)-2,3-dihydroxy-3-methylbutanoate + NADP(+) = (2S)-2-acetolactate + NADPH + H(+). It carries out the reaction (2R,3R)-2,3-dihydroxy-3-methylpentanoate + NADP(+) = (S)-2-ethyl-2-hydroxy-3-oxobutanoate + NADPH + H(+). The protein operates within amino-acid biosynthesis; L-isoleucine biosynthesis; L-isoleucine from 2-oxobutanoate: step 2/4. It functions in the pathway amino-acid biosynthesis; L-valine biosynthesis; L-valine from pyruvate: step 2/4. Involved in the biosynthesis of branched-chain amino acids (BCAA). Catalyzes an alkyl-migration followed by a ketol-acid reduction of (S)-2-acetolactate (S2AL) to yield (R)-2,3-dihydroxy-isovalerate. In the isomerase reaction, S2AL is rearranged via a Mg-dependent methyl migration to produce 3-hydroxy-3-methyl-2-ketobutyrate (HMKB). In the reductase reaction, this 2-ketoacid undergoes a metal-dependent reduction by NADPH to yield (R)-2,3-dihydroxy-isovalerate. The polypeptide is Ketol-acid reductoisomerase (NADP(+)) (Parvibaculum lavamentivorans (strain DS-1 / DSM 13023 / NCIMB 13966)).